Reading from the N-terminus, the 579-residue chain is Transcription factor MTB2 (579 aa).

Residues G373–Q439 are disordered. Low complexity predominate over residues S382–V392. 2 stretches are compositionally biased toward basic and acidic residues: residues E393–R415 and N425–Q439. Residues E428–R441 form a basic motif; degenerate region. Residues E428–M477 enclose the bHLH domain. Positions E442–M477 are helix-loop-helix motif.

It localises to the nucleus. In terms of biological role, transcription factor that negatively regulates jasmonate (JA) signaling. Negatively regulates JA-dependent response to wounding, JA-induced expression of defense genes, JA-dependent responses against herbivorous insects, and JA-dependent resistance against Botrytis cinerea infection. Plays a positive role in resistance against the bacterial pathogen Pseudomonas syringae pv tomato DC3000. The protein is Transcription factor MTB2 of Solanum lycopersicum (Tomato).